Reading from the N-terminus, the 353-residue chain is Elongation factor Ts (353 aa).

The segment at 80–83 (TDFV) is involved in Mg(2+) ion dislocation from EF-Tu.

This sequence belongs to the EF-Ts family.

The protein localises to the cytoplasm. Associates with the EF-Tu.GDP complex and induces the exchange of GDP to GTP. It remains bound to the aminoacyl-tRNA.EF-Tu.GTP complex up to the GTP hydrolysis stage on the ribosome. This chain is Elongation factor Ts, found in Sulfurovum sp. (strain NBC37-1).